Here is a 116-residue protein sequence, read N- to C-terminus: Endocuticle structural glycoprotein SgAbd-4 (116 aa).

Q1 carries the pyrrolidone carboxylic acid modification. Positions 20–92 constitute a Chitin-binding type R&amp;R domain; that stretch reads DGSYQWNYET…PQGAHFPTPP (73 aa). T90 and T107 each carry an O-linked (HexNAc...) threonine glycan. Residue S110 is glycosylated (O-linked (HexNAc...) serine). An O-linked (HexNAc...) threonine glycan is attached at T111. Residue P116 is modified to Proline amide.

Its function is as follows. Component of the abdominal endocuticle. The protein is Endocuticle structural glycoprotein SgAbd-4 of Schistocerca gregaria (Desert locust).